The sequence spans 156 residues: Small ribosomal subunit protein uS7 (156 aa).

This sequence belongs to the universal ribosomal protein uS7 family. As to quaternary structure, part of the 30S ribosomal subunit. Contacts proteins S9 and S11.

In terms of biological role, one of the primary rRNA binding proteins, it binds directly to 16S rRNA where it nucleates assembly of the head domain of the 30S subunit. Is located at the subunit interface close to the decoding center, probably blocks exit of the E-site tRNA. The protein is Small ribosomal subunit protein uS7 of Janthinobacterium sp. (strain Marseille) (Minibacterium massiliensis).